Reading from the N-terminus, the 155-residue chain is 6,7-dimethyl-8-ribityllumazine synthase (155 aa).

5-amino-6-(D-ribitylamino)uracil-binding positions include Phe-23, 57–59, and 80–82; these read AFE and AVI. Position 85–86 (85–86) interacts with (2S)-2-hydroxy-3-oxobutyl phosphate; the sequence is AT. His-88 (proton donor) is an active-site residue. Tyr-113 is a 5-amino-6-(D-ribitylamino)uracil binding site. Arg-127 serves as a coordination point for (2S)-2-hydroxy-3-oxobutyl phosphate.

Belongs to the DMRL synthase family.

It carries out the reaction (2S)-2-hydroxy-3-oxobutyl phosphate + 5-amino-6-(D-ribitylamino)uracil = 6,7-dimethyl-8-(1-D-ribityl)lumazine + phosphate + 2 H2O + H(+). It functions in the pathway cofactor biosynthesis; riboflavin biosynthesis; riboflavin from 2-hydroxy-3-oxobutyl phosphate and 5-amino-6-(D-ribitylamino)uracil: step 1/2. In terms of biological role, catalyzes the formation of 6,7-dimethyl-8-ribityllumazine by condensation of 5-amino-6-(D-ribitylamino)uracil with 3,4-dihydroxy-2-butanone 4-phosphate. This is the penultimate step in the biosynthesis of riboflavin. This chain is 6,7-dimethyl-8-ribityllumazine synthase, found in Moorella thermoacetica (strain ATCC 39073 / JCM 9320).